We begin with the raw amino-acid sequence, 431 residues long: Hemagglutinin-esterase (431 aa).

The first 21 residues, 1–21 (MARTDAMAPRTLLLVLSLGYA), serve as a signal peptide directing secretion. The interval 11-131 (TLLLVLSLGY…DNNRWMGNKA (121 aa)) is esterase domain 1. Over 22 to 399 (FGFNEPLNVV…PVCMYDPLPV (378 aa)) the chain is Virion surface. Ser-44 serves as the catalytic Nucleophile. Residues Cys-48 and Cys-69 are joined by a disulfide bond. N-linked (GlcNAc...) asparagine; by host glycosylation is found at Asn-53, Asn-93, Asn-151, Asn-157, Asn-199, Asn-244, Asn-248, and Asn-309. Residues Cys-117 and Cys-166 are joined by a disulfide bond. The receptor binding stretch occupies residues 132–274 (RFYTQLYQKM…GNYISISNEL (143 aa)). 2 disulfide bridges follow: Cys-205-Cys-284 and Cys-213-Cys-257. Residues 275–387 (LLTVPSKAIC…HCPTAANIVF (113 aa)) are esterase domain 2. Cysteines 315 and 320 form a disulfide. The N-linked (GlcNAc...) asparagine; by host glycan is linked to Asn-324. Catalysis depends on charge relay system residues Asp-334 and His-337. N-linked (GlcNAc...) asparagine; by host glycans are attached at residues Asn-352 and Asn-366. A disulfide bond links Cys-355 and Cys-379. Residues 400–420 (ILLGVLLGIAVLIIVFLMFYF) form a helical membrane-spanning segment. The Intravirion segment spans residues 421–431 (MTDSGVRLHEA).

It belongs to the influenza type C/coronaviruses hemagglutinin-esterase family. As to quaternary structure, homodimer; disulfide-linked. Forms a complex with the M protein in the pre-Golgi. Associates then with S-M complex to form a ternary complex S-M-HE. In terms of processing, N-glycosylated in the host RER.

The protein localises to the virion membrane. The protein resides in the host cell membrane. The catalysed reaction is N-acetyl-9-O-acetylneuraminate + H2O = N-acetylneuraminate + acetate + H(+). It carries out the reaction N-acetyl-4-O-acetylneuraminate + H2O = N-acetylneuraminate + acetate + H(+). In terms of biological role, structural protein that makes short spikes at the surface of the virus. Contains receptor binding and receptor-destroying activities. Mediates de-O-acetylation of N-acetyl-4-O-acetylneuraminic acid, which is probably the receptor determinant recognized by the virus on the surface of erythrocytes and susceptible cells. This receptor-destroying activity is important for virus release as it probably helps preventing self-aggregation and ensures the efficient spread of the progeny virus from cell to cell. May serve as a secondary viral attachment protein for initiating infection, the spike protein being the major one. May become a target for both the humoral and the cellular branches of the immune system. This chain is Hemagglutinin-esterase, found in Murine coronavirus (strain DVIM) (MHV-DVIM).